We begin with the raw amino-acid sequence, 383 residues long: Embryonic pepsinogen (383 aa).

The signal sequence occupies residues 1-16; sequence MRSLALLCAVLALSDG. Residues 76-380 form the Peptidase A1 domain; it reads YYGTISIGTP…DRANNRVGLA (305 aa). Aspartate 94 is a catalytic residue. An intrachain disulfide couples cysteine 107 to cysteine 112. Residues asparagine 132 and asparagine 204 are each glycosylated (N-linked (GlcNAc...) asparagine). The cysteines at positions 267 and 271 are disulfide-linked. Residue aspartate 276 is part of the active site. Residue asparagine 309 is glycosylated (N-linked (GlcNAc...) asparagine). Cysteine 310 and cysteine 344 are oxidised to a cystine. Asparagine 350 carries N-linked (GlcNAc...) asparagine glycosylation.

Belongs to the peptidase A1 family.

This chain is Embryonic pepsinogen, found in Gallus gallus (Chicken).